A 716-amino-acid polypeptide reads, in one-letter code: RNA-directed RNA polymerase catalytic subunit (716 aa).

Positions 286 to 465 constitute a RdRp catalytic domain; that stretch reads SSKLEAVSEV…GINMSPSKCI (180 aa).

The protein belongs to the influenza viruses polymerase PB1 family. As to quaternary structure, RNA polymerase is composed of three subunits: PA, PB1 and PB2.

It carries out the reaction RNA(n) + a ribonucleoside 5'-triphosphate = RNA(n+1) + diphosphate. In Dhori virus (strain Indian/1313/61) (Dho), this protein is RNA-directed RNA polymerase catalytic subunit (P2).